A 222-amino-acid polypeptide reads, in one-letter code: FCS-Like Zinc finger 13 (222 aa).

Residues 149–192 (EFLSSCCLCKKKLQGKDIYMYKGEMGFCSAECRSVQIMNDERQE) form an FLZ-type zinc finger.

This sequence belongs to the FLZ family. Interacts with KIN10 and KIN11 via its FLZ-type zinc finger domain. Interacts with KINB1, KINB2, KINB3 and SNF4 via its N-terminal part.

The protein localises to the nucleus. Its subcellular location is the cytoplasm. Its function is as follows. May act as an adapter to facilitate the interaction of SnRK1 complex with effector proteins, conferring tissue- and stimulus-type specific differences in the SnRK1 regulation pathway. The protein is FCS-Like Zinc finger 13 of Arabidopsis thaliana (Mouse-ear cress).